A 1624-amino-acid polypeptide reads, in one-letter code: Reverse gyrase (1624 aa).

The RG N-terminal-type zinc finger occupies 1 to 42 (MKAIYRGMCPNCRGAITDERLSNKNPCEGCLSEPILSEDYNE). Residues cysteine 9, cysteine 12, cysteine 27, and cysteine 30 each contribute to the Zn(2+) site. ATP-binding positions include glutamine 89 and 106 to 113 (APTGMGKS). The Helicase ATP-binding domain maps to 93–256 (VKRIIRGKSF…KLKKQLAKLL (164 aa)). A DEAD box motif is present at residues 213 to 216 (DDVD). The interval 636–1624 (DLVKSALMIV…LYEEIKRYVR (989 aa)) is topoisomerase I. Residues 640–803 (SALMIVESPN…NIKRIEFHEV (164 aa)) form the Toprim domain. Glutamate 646 is a binding site for Mg(2+). The segment at 720 to 749 (IKRCRDCGHQFVDWEQKGVCPRCGSRNVHD) adopts an RG C-terminal-type zinc-finger fold. The Zn(2+) site is built by cysteine 723, cysteine 726, cysteine 739, and cysteine 742. A Mg(2+)-binding site is contributed by aspartate 772. In terms of domain architecture, Topo IA-type catalytic spans 819 to 1623 (NEDRVNAQLV…ELYEEIKRYV (805 aa)). One can recognise a DOD-type homing endonuclease domain in the interval 1107 to 1222 (IFGVILGKGT…LSVYLYQIGI (116 aa)). Tyrosine 1366 functions as the O-(5'-phospho-DNA)-tyrosine intermediate in the catalytic mechanism.

The protein in the N-terminal section; belongs to the DEAD box helicase family. DDVD subfamily. In the C-terminal section; belongs to the type IA topoisomerase family. Monomer. It depends on Zn(2+) as a cofactor. Mg(2+) is required as a cofactor. This protein undergoes a protein self splicing that involves a post-translational excision of the intervening region (intein) followed by peptide ligation.

It localises to the cytoplasm. The enzyme catalyses ATP + H2O = ADP + phosphate + H(+). In terms of biological role, modifies the topological state of DNA by introducing positive supercoils in an ATP-dependent process, increasing the linking number in steps of +1. Binds to single-stranded DNA, transiently cleaves and then rejoins the ends, introducing a positive supercoil in the process. The scissile phosphodiester is attacked by the catalytic tyrosine of the enzyme, resulting in the formation of a DNA-(5'-phosphotyrosyl)-enzyme intermediate. Probably involved in rewinding DNA strands in regions of the chromosome that have opened up to allow replication, transcription, DNA repair and/or for DNA protection. The sequence is that of Reverse gyrase from Pyrococcus horikoshii (strain ATCC 700860 / DSM 12428 / JCM 9974 / NBRC 100139 / OT-3).